Consider the following 235-residue polypeptide: Phosphoribosylformylglycinamidine synthase subunit PurQ (235 aa).

In terms of domain architecture, Glutamine amidotransferase type-1 spans phenylalanine 5–alanine 235. The active-site Nucleophile is cysteine 88. Residues histidine 205 and glutamate 207 contribute to the active site.

As to quaternary structure, part of the FGAM synthase complex composed of 1 PurL, 1 PurQ and 2 PurS subunits.

It is found in the cytoplasm. It carries out the reaction N(2)-formyl-N(1)-(5-phospho-beta-D-ribosyl)glycinamide + L-glutamine + ATP + H2O = 2-formamido-N(1)-(5-O-phospho-beta-D-ribosyl)acetamidine + L-glutamate + ADP + phosphate + H(+). The catalysed reaction is L-glutamine + H2O = L-glutamate + NH4(+). Its pathway is purine metabolism; IMP biosynthesis via de novo pathway; 5-amino-1-(5-phospho-D-ribosyl)imidazole from N(2)-formyl-N(1)-(5-phospho-D-ribosyl)glycinamide: step 1/2. In terms of biological role, part of the phosphoribosylformylglycinamidine synthase complex involved in the purines biosynthetic pathway. Catalyzes the ATP-dependent conversion of formylglycinamide ribonucleotide (FGAR) and glutamine to yield formylglycinamidine ribonucleotide (FGAM) and glutamate. The FGAM synthase complex is composed of three subunits. PurQ produces an ammonia molecule by converting glutamine to glutamate. PurL transfers the ammonia molecule to FGAR to form FGAM in an ATP-dependent manner. PurS interacts with PurQ and PurL and is thought to assist in the transfer of the ammonia molecule from PurQ to PurL. This chain is Phosphoribosylformylglycinamidine synthase subunit PurQ, found in Salinibacter ruber (strain DSM 13855 / M31).